The primary structure comprises 206 residues: Large ribosomal subunit protein uL4 (206 aa).

This sequence belongs to the universal ribosomal protein uL4 family. In terms of assembly, part of the 50S ribosomal subunit.

Functionally, one of the primary rRNA binding proteins, this protein initially binds near the 5'-end of the 23S rRNA. It is important during the early stages of 50S assembly. It makes multiple contacts with different domains of the 23S rRNA in the assembled 50S subunit and ribosome. Its function is as follows. Forms part of the polypeptide exit tunnel. This Bradyrhizobium sp. (strain BTAi1 / ATCC BAA-1182) protein is Large ribosomal subunit protein uL4.